We begin with the raw amino-acid sequence, 86 residues long: Small ribosomal subunit protein bS16 (86 aa).

Belongs to the bacterial ribosomal protein bS16 family.

In Nostoc punctiforme (strain ATCC 29133 / PCC 73102), this protein is Small ribosomal subunit protein bS16.